A 317-amino-acid chain; its full sequence is Acetyl-coenzyme A carboxylase carboxyl transferase subunit alpha (317 aa).

The region spanning 40–293 (LEGRVRDAMV…EAVIGDALKE (254 aa)) is the CoA carboxyltransferase C-terminal domain.

This sequence belongs to the AccA family. In terms of assembly, acetyl-CoA carboxylase is a heterohexamer composed of biotin carboxyl carrier protein (AccB), biotin carboxylase (AccC) and two subunits each of ACCase subunit alpha (AccA) and ACCase subunit beta (AccD).

Its subcellular location is the cytoplasm. It carries out the reaction N(6)-carboxybiotinyl-L-lysyl-[protein] + acetyl-CoA = N(6)-biotinyl-L-lysyl-[protein] + malonyl-CoA. The protein operates within lipid metabolism; malonyl-CoA biosynthesis; malonyl-CoA from acetyl-CoA: step 1/1. Component of the acetyl coenzyme A carboxylase (ACC) complex. First, biotin carboxylase catalyzes the carboxylation of biotin on its carrier protein (BCCP) and then the CO(2) group is transferred by the carboxyltransferase to acetyl-CoA to form malonyl-CoA. This chain is Acetyl-coenzyme A carboxylase carboxyl transferase subunit alpha, found in Sinorhizobium medicae (strain WSM419) (Ensifer medicae).